Reading from the N-terminus, the 316-residue chain is Ferrochelatase (316 aa).

Histidine 188 and glutamate 269 together coordinate Fe cation.

It belongs to the ferrochelatase family.

The protein resides in the cytoplasm. It carries out the reaction heme b + 2 H(+) = protoporphyrin IX + Fe(2+). The protein operates within porphyrin-containing compound metabolism; protoheme biosynthesis; protoheme from protoporphyrin-IX: step 1/1. Catalyzes the ferrous insertion into protoporphyrin IX. The sequence is that of Ferrochelatase from Wolinella succinogenes (strain ATCC 29543 / DSM 1740 / CCUG 13145 / JCM 31913 / LMG 7466 / NCTC 11488 / FDC 602W) (Vibrio succinogenes).